The following is a 161-amino-acid chain: MKFFAVLALCIVGAIASPLTADEASLVQSSWKAVSHNEVDILAAVFAAYPDIQAKFPQFAGKDLASIKDTGAFATHATRIVSFLSEVIALSGNESNASAVNSLVSKLGDDHKARGVSAAQFGEFRTALVAYLSNHVSWGDNVAAAWNKALDNTYAIVVPRL.

A signal peptide spans 1 to 16 (MKFFAVLALCIVGAIA). The Globin domain maps to 18–161 (PLTADEASLV…NTYAIVVPRL (144 aa)). Positions 76 and 111 each coordinate heme b.

It belongs to the globin family. Homodimer.

The polypeptide is Globin CTT-VIIB-3 (CTT-7B3) (Chironomus thummi thummi (Midge)).